Here is a 409-residue protein sequence, read N- to C-terminus: TM2 domain-containing protein ZK858.5 (409 aa).

The TM2 domain maps to 8 to 55 (VKPWIVRIILIVGGLFGAHRLYLKQVPEAFVFFSTLGVLLIGWLYDSF). The next 6 helical transmembrane spans lie at 10–30 (PWIV…RLYL), 37–57 (FVFF…SFMF), 104–124 (VLYG…TFGW), 127–147 (INLI…IYII), 168–190 (MFIM…AIVS), and 209–229 (HFLF…LGCS).

The protein belongs to the TM2 family.

The protein resides in the membrane. In Caenorhabditis elegans, this protein is TM2 domain-containing protein ZK858.5.